The chain runs to 106 residues: Tubulin-specific chaperone A (106 aa).

Ser94 carries the post-translational modification Phosphoserine.

It belongs to the TBCA family.

The protein localises to the cytoplasm. Its subcellular location is the cytoskeleton. Tubulin-folding protein; involved in the early step of the tubulin folding pathway. This is Tubulin-specific chaperone A (RBL2) from Saccharomyces cerevisiae (strain ATCC 204508 / S288c) (Baker's yeast).